A 275-amino-acid polypeptide reads, in one-letter code: HUWE1-associated protein modifying stress responses (275 aa).

Acidic residues predominate over residues 32–44 (AEQDEQLSPELQE). Disordered stretches follow at residues 32–51 (AEQD…AAAQ), 155–181 (RNSR…SSVE), 204–228 (SVRS…RRNG), and 250–275 (GTRK…NRML). A Phosphoserine modification is found at Ser-167. Positions 172–181 (TSTETSSSVE) are enriched in low complexity. Positions 204 to 221 (SVRSSTPGSPTHVSSGPN) are enriched in polar residues. Position 212 is a phosphoserine (Ser-212).

It belongs to the HAPSTR1 family. As to quaternary structure, homooligomer. Heterooligomer with HAPSTR2; the interaction is direct and stabilizes HAPSTR1. Interacts with HUWE1. Post-translationally, ubiquitinated by HUWE1. Promotes HAPSTR1 degradation through polyubiquitination.

It localises to the nucleus. It is found in the cytoplasm. In terms of biological role, acts as a central player within a network of stress response pathways promoting cellular adaptability. The E3 ligase HUWE1 assists HAPSTR1 in controlling stress signaling and in turn, HUWE1 feeds back to promote the degradation of HAPSTR1. HAPSTR1 represents a central coordination mechanism for stress response programs. Functions as a negative regulator of TP53/P53 in the cellular response to telomere erosion and probably also DNA damage. May attenuate p53/TP53 activation through the E3 ubiquitin ligase HUWE1. This Mus musculus (Mouse) protein is HUWE1-associated protein modifying stress responses.